The chain runs to 111 residues: Cytochrome c2 (111 aa).

Cysteine 14, cysteine 17, histidine 18, and methionine 83 together coordinate heme c.

It belongs to the cytochrome c family. Post-translationally, binds 1 heme c group covalently per subunit.

Functionally, cytochrome c2 is found mainly in purple, non-sulfur, photosynthetic bacteria where it functions as the electron donor to the oxidized bacteriochlorophyll in the photophosphorylation pathway. However, it may also have a role in the respiratory chain and is found in some non-photosynthetic bacteria. The polypeptide is Cytochrome c2 (Agrobacterium tumefaciens (strain II Chrys)).